Consider the following 123-residue polypeptide: Phosphoribosyl-AMP cyclohydrolase (123 aa).

Asp-73 contacts Mg(2+). Residue Cys-74 participates in Zn(2+) binding. 2 residues coordinate Mg(2+): Asp-75 and Asp-77. Zn(2+) is bound by residues Cys-90 and Cys-97.

This sequence belongs to the PRA-CH family. In terms of assembly, homodimer. It depends on Mg(2+) as a cofactor. Zn(2+) serves as cofactor.

Its subcellular location is the cytoplasm. It catalyses the reaction 1-(5-phospho-beta-D-ribosyl)-5'-AMP + H2O = 1-(5-phospho-beta-D-ribosyl)-5-[(5-phospho-beta-D-ribosylamino)methylideneamino]imidazole-4-carboxamide. Its pathway is amino-acid biosynthesis; L-histidine biosynthesis; L-histidine from 5-phospho-alpha-D-ribose 1-diphosphate: step 3/9. In terms of biological role, catalyzes the hydrolysis of the adenine ring of phosphoribosyl-AMP. The polypeptide is Phosphoribosyl-AMP cyclohydrolase (Methanoregula boonei (strain DSM 21154 / JCM 14090 / 6A8)).